A 726-amino-acid polypeptide reads, in one-letter code: DNA ligase (726 aa).

NAD(+) contacts are provided by residues 34 to 38 (DAEYD), 83 to 84 (SL), and Glu115. Lys117 acts as the N6-AMP-lysine intermediate in catalysis. Arg138, Glu190, Lys306, and Lys330 together coordinate NAD(+). The Zn(2+) site is built by Cys424, Cys427, Cys442, and Cys448. The BRCT domain occupies 608 to 698 (SRGNALAGKT…RTADDQATPA (91 aa)). Residues 690 to 726 (TADDQATPASDRRAATASVPPSDDAPGSPRQLDFDLT) are disordered.

Belongs to the NAD-dependent DNA ligase family. LigA subfamily. Requires Mg(2+) as cofactor. The cofactor is Mn(2+).

The enzyme catalyses NAD(+) + (deoxyribonucleotide)n-3'-hydroxyl + 5'-phospho-(deoxyribonucleotide)m = (deoxyribonucleotide)n+m + AMP + beta-nicotinamide D-nucleotide.. DNA ligase that catalyzes the formation of phosphodiester linkages between 5'-phosphoryl and 3'-hydroxyl groups in double-stranded DNA using NAD as a coenzyme and as the energy source for the reaction. It is essential for DNA replication and repair of damaged DNA. The polypeptide is DNA ligase (Roseiflexus sp. (strain RS-1)).